The chain runs to 202 residues: UPF0301 protein mlr7511 (202 aa).

The protein belongs to the UPF0301 (AlgH) family.

This is UPF0301 protein mlr7511 from Mesorhizobium japonicum (strain LMG 29417 / CECT 9101 / MAFF 303099) (Mesorhizobium loti (strain MAFF 303099)).